A 147-amino-acid chain; its full sequence is C-glycoside deglycosidase beta subunit (147 aa).

Belongs to the C-glycoside deglycosidase beta subunit family. In terms of assembly, heterooctamer composed of four alpha subunits (DfgA) and four beta subunits (DfgB). Requires Mn(2+) as cofactor.

The catalysed reaction is 3''-dehydroisoorientin = 1,5-anhydro-D-erythro-hex-1-en-3-ulose + luteolin. It catalyses the reaction 3''-dehydroisovitexin = 1,5-anhydro-D-erythro-hex-1-en-3-ulose + apigenin. Activity is strongly reduced in the presence of chelating agents. Carbon-carbon bond-cleaving enzyme which participates in the metabolism of C-glycosides. Acts on the C6-glycosylated compounds 3''-dehydroisoorientin (3''-oxo-homoorientin) and 3''-dehydroisovitexin (3''-oxo-isovitexin). This is C-glycoside deglycosidase beta subunit from Eubacterium cellulosolvens (strain ATCC 43171 / JCM 9499 / 6) (Cillobacterium cellulosolvens).